The following is a 485-amino-acid chain: Probable protein phosphatase 2C 3 (485 aa).

Residues 1 to 11 show a composition bias toward low complexity; sequence MSSPSPSSEAA. Disordered regions lie at residues 1–29 and 43–72; these read MSSP…AAGG and ARAE…AEGG. The segment covering 13–23 has biased composition (basic residues); that stretch reads AHHHHHQRRQH. Residues 107-353 enclose the PPM-type phosphatase domain; it reads SSSSSSSLAS…DDTTCIVVDM (247 aa). Mn(2+)-binding residues include aspartate 129, glycine 130, aspartate 305, and aspartate 344.

The protein belongs to the PP2C family. Mg(2+) serves as cofactor. It depends on Mn(2+) as a cofactor.

The enzyme catalyses O-phospho-L-seryl-[protein] + H2O = L-seryl-[protein] + phosphate. It catalyses the reaction O-phospho-L-threonyl-[protein] + H2O = L-threonyl-[protein] + phosphate. The protein is Probable protein phosphatase 2C 3 of Oryza sativa subsp. japonica (Rice).